The chain runs to 658 residues: MRGCLQTVRWLTSAWQRPPSYPPLSRAAPCRFFNVSIPRNEQSRKPVSDLERRIAAIPIDRFRNFCIVAHVDHGKSTLSDRLLELTGTIQPGGNKQVLDKLDVERERGITVKAQTCTMLYNYRGEDYLLHLVDTPGHVDFRAEVSRSYASCGGALLLVDASQGVQAQTVANFYLAFAEGLKLVPVINKVDLPSADPVRALDQMANTFELDPKTAVLVSAKTGQNVEQLLPTVVEQIPAPVGVHTKPLRMLLVDSWYSTYKGVILLVRIFDGEVRAGDHVGSLATGLKYHVGEVGIMYPGQTAQSVLRAGQVGYIYFNPAMKRSQEAKVGDTYTKVGSEKLIEPLPGFEEPKSMVFVAAYPVDASDFPHLEDSINQLLLNDRSITLQKESSEALGAGFRLGFLGTLHCSVFEDRLRQEHGASIIITPPTVPFKVIWKDGKEEIITNPALFPEEDALRAKVVELQEPFVLATLTFPEEYLGRVIELCESNRGEQKSLEFFTATQVILKYELPLAQLVDDFFGKLKGSTKGYASLDYEESGWRRSSIAKLQLLVNKVPVDAVSRVVHSSQVQKLGRVWVSKFKEHVDRQMFEVVIQAAVGRNIVARETIKPFRKDVLQKLHAADVTRRRKLLEKQKEGRKKLKAVGNVVIEHKAFQAFLAK.

A mitochondrion-targeting transit peptide spans 1–40; it reads MRGCLQTVRWLTSAWQRPPSYPPLSRAAPCRFFNVSIPRN. The tr-type G domain maps to 60–240; the sequence is DRFRNFCIVA…TVVEQIPAPV (181 aa). GTP is bound by residues 69 to 76, 133 to 137, and 187 to 190; these read AHVDHGKS, DTPGH, and NKVD.

The protein belongs to the TRAFAC class translation factor GTPase superfamily. Classic translation factor GTPase family. LepA subfamily.

Its subcellular location is the mitochondrion inner membrane. It catalyses the reaction GTP + H2O = GDP + phosphate + H(+). Promotes mitochondrial protein synthesis. May act as a fidelity factor of the translation reaction, by catalyzing a one-codon backward translocation of tRNAs on improperly translocated ribosomes. Binds to mitochondrial ribosomes in a GTP-dependent manner. The protein is Translation factor GUF1, mitochondrial of Paracoccidioides brasiliensis (strain Pb18).